The following is a 415-amino-acid chain: Dihydroorotase (415 aa).

The Zn(2+) site is built by His54 and His56. Substrate-binding positions include 56–58 (HFR) and Asn88. Positions 136, 169, 217, and 278 each coordinate Zn(2+). Lys136 bears the N6-carboxylysine mark. Residue Asp278 is part of the active site. His282 is a substrate binding site.

This sequence belongs to the metallo-dependent hydrolases superfamily. DHOase family. Class I DHOase subfamily. Zn(2+) serves as cofactor.

The catalysed reaction is (S)-dihydroorotate + H2O = N-carbamoyl-L-aspartate + H(+). It functions in the pathway pyrimidine metabolism; UMP biosynthesis via de novo pathway; (S)-dihydroorotate from bicarbonate: step 3/3. Catalyzes the reversible cyclization of carbamoyl aspartate to dihydroorotate. The chain is Dihydroorotase from Thermoplasma volcanium (strain ATCC 51530 / DSM 4299 / JCM 9571 / NBRC 15438 / GSS1).